A 321-amino-acid chain; its full sequence is Replication factor C small subunit (321 aa).

Position 43–50 (43–50 (GFAGVGKT)) interacts with ATP.

The protein belongs to the activator 1 small subunits family. RfcS subfamily. As to quaternary structure, heteromultimer composed of small subunits (RfcS) and large subunits (RfcL).

Functionally, part of the RFC clamp loader complex which loads the PCNA sliding clamp onto DNA. The protein is Replication factor C small subunit of Methanosphaera stadtmanae (strain ATCC 43021 / DSM 3091 / JCM 11832 / MCB-3).